The sequence spans 443 residues: D-lactate dehydrogenase (443 aa).

The Extracellular segment spans residues 1-182 (MSWIDELSKI…GGKTIKNSSG (182 aa)). An FAD-binding PCMH-type domain is found at 32 to 209 (RAAENFVVVK…TKATIRLFPQ (178 aa)). A helical membrane pass occupies residues 183–203 (YSLLHLLVGSEGTLAVITKAT). At 204 to 383 (IRLFPQMRDM…WEKSYFEFRK (180 aa)) the chain is on the cytoplasmic side. Residues 384-404 (SLLSLAVSLGGVISGEHGIGA) form a helical membrane-spanning segment. Residues 405 to 443 (VKLSELEELFPEQFELMRQIKLLFDPKNILNPGKVVRKL) lie on the Extracellular side of the membrane.

It belongs to the FAD-binding oxidoreductase/transferase type 4 family. FAD is required as a cofactor. Requires Zn(2+) as cofactor.

It is found in the cell membrane. The catalysed reaction is (R)-lactate + A = pyruvate + AH2. Catalyzes the dehydrogenation of (R)-lactate (D-lactate) to pyruvate. Is likely involved in the utilization of D-lactate as a sole source for both carbon and electrons for dissimilatory sulfate reduction. Cannot use L-lactate as substrate, and NAD(+), horse cytochrome c, methylene blue or dimethylnaphthoquinone as acceptors. Active in vitro with artificial electron acceptors such as 2,6-dichlorophenolindophenol (DCPIP); the physiological acceptor is not known, but potential acceptors include cytochromes or quinones. This chain is D-lactate dehydrogenase, found in Archaeoglobus fulgidus (strain ATCC 49558 / DSM 4304 / JCM 9628 / NBRC 100126 / VC-16).